A 508-amino-acid polypeptide reads, in one-letter code: Methionine--tRNA ligase (508 aa).

Positions 12–22 (YYVNDVAHIGH) match the 'HIGH' region motif. Residues 295–299 (KISKS) carry the 'KMSKS' region motif. ATP is bound at residue K298.

The protein belongs to the class-I aminoacyl-tRNA synthetase family. MetG type 2B subfamily. Monomer.

It localises to the cytoplasm. It carries out the reaction tRNA(Met) + L-methionine + ATP = L-methionyl-tRNA(Met) + AMP + diphosphate. Its function is as follows. Is required not only for elongation of protein synthesis but also for the initiation of all mRNA translation through initiator tRNA(fMet) aminoacylation. This chain is Methionine--tRNA ligase (metG), found in Rickettsia prowazekii (strain Madrid E).